The primary structure comprises 179 residues: Small ribosomal subunit protein uS5 (179 aa).

Residues 22-85 (MIEKLVAVNR…EYARKTMANV (64 aa)) form the S5 DRBM domain.

This sequence belongs to the universal ribosomal protein uS5 family. Part of the 30S ribosomal subunit. Contacts proteins S4 and S8.

Functionally, with S4 and S12 plays an important role in translational accuracy. In terms of biological role, located at the back of the 30S subunit body where it stabilizes the conformation of the head with respect to the body. The protein is Small ribosomal subunit protein uS5 of Xylella fastidiosa (strain 9a5c).